We begin with the raw amino-acid sequence, 293 residues long: Protease HtpX homolog (293 aa).

The next 2 helical transmembrane spans lie at 5–25 (IFLFIVTNLAILLMLSITLRL) and 43–63 (ALLVFSAVLGFGGSLISLAMS). Histidine 148 contributes to the Zn(2+) binding site. The active site involves glutamate 149. Histidine 152 contacts Zn(2+). A run of 2 helical transmembrane segments spans residues 159-179 (VTLALIQGVVNTFVIFLSRII) and 199-219 (FVTSLIAQMVLGILATIIVMW). Glutamate 225 contributes to the Zn(2+) binding site.

This sequence belongs to the peptidase M48B family. Zn(2+) is required as a cofactor.

The protein localises to the cell inner membrane. This chain is Protease HtpX homolog, found in Nitrosomonas europaea (strain ATCC 19718 / CIP 103999 / KCTC 2705 / NBRC 14298).